Reading from the N-terminus, the 595-residue chain is DNA primase (595 aa).

The CHC2-type zinc-finger motif lies at 38–62 (CPFHQEKTPSFTVSNSKRFFYCFGC). One can recognise a Toprim domain in the interval 250-332 (NHSILVEGYF…EKKISFIRLP (83 aa)). 3 residues coordinate Mg(2+): Glu256, Asp300, and Asp302.

Belongs to the DnaG primase family. Monomer. Interacts with DnaB. Zn(2+) is required as a cofactor. Requires Mg(2+) as cofactor.

It carries out the reaction ssDNA + n NTP = ssDNA/pppN(pN)n-1 hybrid + (n-1) diphosphate.. Its function is as follows. RNA polymerase that catalyzes the synthesis of short RNA molecules used as primers for DNA polymerase during DNA replication. This is DNA primase from Rickettsia conorii (strain ATCC VR-613 / Malish 7).